A 191-amino-acid chain; its full sequence is Large ribosomal subunit protein uL6A (191 aa).

This sequence belongs to the universal ribosomal protein uL6 family. In terms of assembly, component of the large ribosomal subunit (LSU). Mature yeast ribosomes consist of a small (40S) and a large (60S) subunit. The 40S small subunit contains 1 molecule of ribosomal RNA (18S rRNA) and 33 different proteins (encoded by 57 genes). The large 60S subunit contains 3 rRNA molecules (25S, 5.8S and 5S rRNA) and 46 different proteins (encoded by 81 genes). uL6 lines the binding pocket for eukaryotic elongation factor 2 (eEF2).

The protein resides in the cytoplasm. Its function is as follows. Component of the ribosome, a large ribonucleoprotein complex responsible for the synthesis of proteins in the cell. The small ribosomal subunit (SSU) binds messenger RNAs (mRNAs) and translates the encoded message by selecting cognate aminoacyl-transfer RNA (tRNA) molecules. The large subunit (LSU) contains the ribosomal catalytic site termed the peptidyl transferase center (PTC), which catalyzes the formation of peptide bonds, thereby polymerizing the amino acids delivered by tRNAs into a polypeptide chain. The nascent polypeptides leave the ribosome through a tunnel in the LSU and interact with protein factors that function in enzymatic processing, targeting, and the membrane insertion of nascent chains at the exit of the ribosomal tunnel. This is Large ribosomal subunit protein uL6A from Saccharomyces cerevisiae (strain ATCC 204508 / S288c) (Baker's yeast).